Consider the following 492-residue polypeptide: NADH-quinone oxidoreductase subunit N (492 aa).

14 helical membrane-spanning segments follow: residues 13–33, 42–62, 79–99, 111–131, 133–153, 168–188, 211–231, 251–271, 284–304, 318–340, 344–366, 388–408, 426–446, and 463–483; these read MMTPEFIVLGTALILSLMDLF, PLAWIAFVGVAIALIATIGLI, FGKAFKLLLLAGGALSLLLAF, GEFYYLLLCALLGAMIMASSG, LITLFVGLELLSISSYILAGI, VINGGISTAITLFGMSYIFGL, YILAIAFLMMLVGLSFKISSV, FLSVVSKTAGFVIVLRLFITI, SLLFSMQDYIAFLAGATMIIG, FAYSSIAHAGYILVGFAAMSWVM, IWFYLLAYLFMNLGAFAILQRIS, AVAMGIFLLSLAGIPGTAGFI, VLAAVMIATTVVSYVYYFGIF, and PIGLAMVVVLCALGTLLFGVV.

This sequence belongs to the complex I subunit 2 family. In terms of assembly, NDH-1 is composed of 14 different subunits. Subunits NuoA, H, J, K, L, M, N constitute the membrane sector of the complex.

The protein localises to the cell membrane. It catalyses the reaction a quinone + NADH + 5 H(+)(in) = a quinol + NAD(+) + 4 H(+)(out). Its function is as follows. NDH-1 shuttles electrons from NADH, via FMN and iron-sulfur (Fe-S) centers, to quinones in the respiratory chain. The immediate electron acceptor for the enzyme in this species is believed to be a menaquinone. Couples the redox reaction to proton translocation (for every two electrons transferred, four hydrogen ions are translocated across the cytoplasmic membrane), and thus conserves the redox energy in a proton gradient. The sequence is that of NADH-quinone oxidoreductase subunit N from Geobacillus sp. (strain WCH70).